The following is a 244-amino-acid chain: Adiponectin (244 aa).

Positions M1 to Q18 are cleaved as a signal peptide. Residues T21 and T22 are each glycosylated (O-linked (GalNAc...) threonine). Residue K33 is modified to 5-hydroxylysine. C36 carries the post-translational modification S-(2-succinyl)cysteine. The tract at residues M40–K101 is disordered. The Collagen-like domain occupies G42–G107. 4-hydroxyproline is present on residues P44, P47, and P53. The span at R55–D70 shows a compositional bias: basic and acidic residues. 5-hydroxylysine is present on residues K65 and K68. O-linked (Gal...) hydroxylysine; partial glycosylation is found at K65 and K68. 4-hydroxyproline; partial occurs at positions 71 and 76. 5-hydroxylysine is present on K77. A glycan (O-linked (Gal...) hydroxylysine; partial) is linked at K77. Residue P91 is modified to 4-hydroxyproline. Position 95 is a 4-hydroxyproline; partial (P95). At K101 the chain carries 5-hydroxylysine. K101 carries O-linked (Gal...) hydroxylysine; partial glycosylation. Positions A108–N244 constitute a C1q domain.

As to quaternary structure, homomultimer. Forms trimers, hexamers and 12- to 18-mers. The trimers (low molecular weight complexes / LMW) are assembled via non-covalent interactions of the collagen-like domains in a triple helix and hydrophobic interactions within the globular C1q domain. Several trimers can associate to form disulfide-linked hexamers (middle molecular weight complexes / MMW) and larger complexes (higher molecular weight / HMW). The HMW-complex assembly is also modulated by the degree of lysine hydroxylation and glycosylation. LMW, MMW and HMW complexes bind to HBEGF, MMW and HMW complexes bind to PDGFB, and HMW complex binds to FGF2. Interacts with CTRP9 via the C1q domain (heterotrimeric complex). In terms of processing, HMW complexes are more extensively glycosylated than smaller oligomers. Hydroxylation and glycosylation of the lysine residues within the collagen-like domain of adiponectin seem to be critically involved in regulating the formation and/or secretion of HMW complexes and consequently contribute to the insulin-sensitizing activity of adiponectin in hepatocytes. Post-translationally, O-glycosylated. Not N-glycosylated. O-linked glycans on hydroxylysines consist of Glc-Gal disaccharides bound to the oxygen atom of post-translationally added hydroxyl groups. Sialylated to varying degrees depending on tissue. Thr-22 appears to be the major site of sialylation. Higher sialylation found in SGBS adipocytes than in HEK fibroblasts. Sialylation is not required neither for heterodimerization nor for secretion. Not sialylated on the glycosylated hydroxylysines. Desialylated forms are rapidly cleared from the circulation. Succination of Cys-36 by the Krebs cycle intermediate fumarate, which leads to S-(2-succinyl)cysteine residues, inhibits polymerization and secretion of adiponectin. Adiponectin is a major target for succination in both adipocytes and adipose tissue of diabetic mammals. It was proposed that succination of proteins is a biomarker of mitochondrial stress and accumulation of Krebs cycle intermediates in adipose tissue in diabetes and that succination of adiponectin may contribute to the decrease in plasma adiponectin in diabetes. Synthesized exclusively by adipocytes and secreted into plasma.

The protein resides in the secreted. Polymerization and secretion of adiponectin is inhibited by succination of cysteine residues by the Krebs cycle intermediate fumarate, which leads to S-(2-succinyl)cysteine residues. In terms of biological role, important adipokine involved in the control of fat metabolism and insulin sensitivity, with direct anti-diabetic, anti-atherogenic and anti-inflammatory activities. Stimulates AMPK phosphorylation and activation in the liver and the skeletal muscle, enhancing glucose utilization and fatty-acid combustion. Antagonizes TNF-alpha by negatively regulating its expression in various tissues such as liver and macrophages, and also by counteracting its effects. Inhibits endothelial NF-kappa-B signaling through a cAMP-dependent pathway. May play a role in cell growth, angiogenesis and tissue remodeling by binding and sequestering various growth factors with distinct binding affinities, depending on the type of complex, LMW, MMW or HMW. The polypeptide is Adiponectin (ADIPOQ) (Homo sapiens (Human)).